The chain runs to 385 residues: Cell division protein FtsZ (385 aa).

GTP contacts are provided by residues 37-41 (GGGSN), 125-127 (GTG), E156, K160, and D204.

This sequence belongs to the FtsZ family. As to quaternary structure, homodimer. Polymerizes to form a dynamic ring structure in a strictly GTP-dependent manner. Interacts directly with several other division proteins.

It is found in the cytoplasm. In terms of biological role, essential cell division protein that forms a contractile ring structure (Z ring) at the future cell division site. The regulation of the ring assembly controls the timing and the location of cell division. One of the functions of the FtsZ ring is to recruit other cell division proteins to the septum to produce a new cell wall between the dividing cells. Binds GTP and shows GTPase activity. This Helicobacter pylori (strain J99 / ATCC 700824) (Campylobacter pylori J99) protein is Cell division protein FtsZ.